The sequence spans 243 residues: Polycomb group RING finger protein 1 (243 aa).

Lysine 12 is covalently cross-linked (Glycyl lysine isopeptide (Lys-Gly) (interchain with G-Cter in SUMO2)). The segment at 35 to 74 (CCLCAGYFVDATTITECLHTFCKSCIVKYLQTSKYCPMCN) adopts an RING-type zinc-finger fold. The segment at 74-231 (NIKIHETQPL…LSRWFGKPSP (158 aa)) is necessary for repressor activity. Lysine 76 participates in a covalent cross-link: Glycyl lysine isopeptide (Lys-Gly) (interchain with G-Cter in SUMO2). Positions 138 to 239 (LPFTSFDHYY…SPLLLQYSVK (102 aa)) are required for the interaction with the KDM2B-SKP1 heterodimeric complex. An RING-finger and WD40-associated ubiquitin-like domain (RAWUL); sufficient for interaction with BCOR and BCORL1 region spans residues 151–239 (EQLSLCLERL…SPLLLQYSVK (89 aa)).

Interacts with BCORL1, forming heterodimers. The PCGF1-BCORL1 heterodimeric complex interacts with the KDM2B-SKP1 heterodimeric complex to form a homotetrameric polycomb repression complex 1 (PRC1.1). Component of the repressive BCOR complex containing a Polycomb group subcomplex at least composed of RYBP, RING1 and RNF2/RING2. Specifically interacts with BCOR, RING1 and RNF2/RING2. Component of a PRC1-like complex. Interacts with CBX6, CBX7 and CBX8. Interacts with DPPA4, NANOG, POU5F1 and RYBP. In terms of tissue distribution, highly expressed in brain, cerebellum, heart and testis.

It localises to the nucleus. In terms of biological role, component of the Polycomb group (PcG) multiprotein BCOR complex, a complex required to maintain the transcriptionally repressive state of some genes, such as BCL6 and the cyclin-dependent kinase inhibitor, CDKN1A. Transcriptional repressor that may be targeted to the DNA by BCL6; this transcription repressor activity may be related to PKC signaling pathway. Represses CDKN1A expression by binding to its promoter, and this repression is dependent on the retinoic acid response element (RARE element). Promotes cell cycle progression and enhances cell proliferation as well. May have a positive role in tumor cell growth by down-regulating CDKN1A. Component of a Polycomb group (PcG) multiprotein PRC1-like complex, a complex class required to maintain the transcriptionally repressive state of many genes, including Hox genes, throughout development. PcG PRC1 complex acts via chromatin remodeling and modification of histones; it mediates monoubiquitination of histone H2A 'Lys-119', rendering chromatin heritably changed in its expressibility. Within the PRC1-like complex, regulates RNF2 ubiquitin ligase activity. Regulates the expression of DPPA4 and NANOG in the NT2 embryonic carcinoma cells. The sequence is that of Polycomb group RING finger protein 1 (Pcgf1) from Rattus norvegicus (Rat).